Here is a 699-residue protein sequence, read N- to C-terminus: Chitin synthase 7 (699 aa).

The next 6 membrane-spanning stretches (helical) occupy residues 19 to 39 (IVGV…AAFL), 58 to 80 (SVVV…VVTL), 98 to 118 (LQWF…LFCI), 445 to 465 (FMQN…LAII), 474 to 494 (LPVG…IYFG), and 507 to 527 (VMFV…IFTA). A disordered region spans residues 628–648 (AAGGSGEASEPGTRWAPDPRE).

This sequence belongs to the chitin synthase family. Class VI subfamily.

Its subcellular location is the cell membrane. The enzyme catalyses [(1-&gt;4)-N-acetyl-beta-D-glucosaminyl](n) + UDP-N-acetyl-alpha-D-glucosamine = [(1-&gt;4)-N-acetyl-beta-D-glucosaminyl](n+1) + UDP + H(+). In terms of biological role, polymerizes chitin, a structural polymer of the cell wall and septum, by transferring the sugar moiety of UDP-GlcNAc to the non-reducing end of the growing chitin polymer. Plays a role in cell wall integrity. Required to successfully penetrate the host plants and thus plays a key role in pathogenicity. The chain is Chitin synthase 7 from Verticillium dahliae (strain VdLs.17 / ATCC MYA-4575 / FGSC 10137) (Verticillium wilt).